The sequence spans 227 residues: Orotate phosphoribosyltransferase 2 (227 aa).

An orotate-binding site is contributed by 41–42 (FF). 5-phospho-alpha-D-ribose 1-diphosphate is bound by residues 79–80 (YK), Arg109, Lys110, Lys113, His115, and 135–143 (DDVMTAGTA). Residues Thr139 and Arg167 each contribute to the orotate site.

The protein belongs to the purine/pyrimidine phosphoribosyltransferase family. PyrE subfamily. As to quaternary structure, homodimer.

It catalyses the reaction orotidine 5'-phosphate + diphosphate = orotate + 5-phospho-alpha-D-ribose 1-diphosphate. It functions in the pathway pyrimidine metabolism; UMP biosynthesis via de novo pathway; UMP from orotate: step 1/2. Functionally, catalyzes the transfer of a ribosyl phosphate group from 5-phosphoribose 1-diphosphate to orotate, leading to the formation of orotidine monophosphate (OMP). The chain is Orotate phosphoribosyltransferase 2 (URA10) from Saccharomyces cerevisiae (strain ATCC 204508 / S288c) (Baker's yeast).